The sequence spans 294 residues: Pantothenate synthetase 3 (294 aa).

Methionine 31–histidine 38 provides a ligand contact to ATP. The active-site Proton donor is the histidine 38. Residue glutamine 62 participates in (R)-pantoate binding. Beta-alanine is bound at residue glutamine 62. Glycine 154 to aspartate 157 lines the ATP pocket. Residue glutamine 160 participates in (R)-pantoate binding. Leucine 191–arginine 194 provides a ligand contact to ATP.

It belongs to the pantothenate synthetase family. In terms of assembly, homodimer.

The protein localises to the cytoplasm. It carries out the reaction (R)-pantoate + beta-alanine + ATP = (R)-pantothenate + AMP + diphosphate + H(+). It participates in cofactor biosynthesis; (R)-pantothenate biosynthesis; (R)-pantothenate from (R)-pantoate and beta-alanine: step 1/1. In terms of biological role, catalyzes the condensation of pantoate with beta-alanine in an ATP-dependent reaction via a pantoyl-adenylate intermediate. In Frankia alni (strain DSM 45986 / CECT 9034 / ACN14a), this protein is Pantothenate synthetase 3.